The sequence spans 864 residues: Disintegrin and metalloproteinase domain-containing protein 15 (864 aa).

Residues 1-17 (MRLALLWALGLLGAGSP) form the signal peptide. Positions 17–49 (PRPSPPLPNIGGTEEEQQASPERTQSRSLENQV) are disordered. The propeptide occupies 18-208 (RPSPPLPNIG…EQHHLRRLKR (191 aa)). Positions 34–49 (QASPERTQSRSLENQV) are enriched in polar residues. An N-linked (GlcNAc...) asparagine glycan is attached at Asn57. A Cysteine switch motif is present at residues 178 to 185 (HTCAPSWH). Position 180 (Cys180) interacts with Zn(2+). At 209 to 698 (DVVTETKIVE…QLRATSSLTT (490 aa)) the chain is on the extracellular side. Residues 215–416 (KIVELVIVAD…GMGSCLFEWP (202 aa)) enclose the Peptidase M12B domain. A glycan (N-linked (GlcNAc...) asparagine) is linked at Asn239. Disulfide bonds link Cys325–Cys411, Cys367–Cys395, Cys369–Cys378, and Cys482–Cys502. His350 is a binding site for Zn(2+). Glu351 is a catalytic residue. His354 and His360 together coordinate Zn(2+). N-linked (GlcNAc...) asparagine glycosylation is found at Asn391 and Asn394. A Disintegrin domain is found at 423–510 (SSLCGNMFVD…QCPPDIRLGD (88 aa)). 2 N-linked (GlcNAc...) asparagine glycosylation sites follow: Asn608 and Asn613. 3 cysteine pairs are disulfide-bonded: Cys659-Cys669, Cys663-Cys675, and Cys677-Cys686. Positions 659–687 (CRSKCHGHGVCDSSRHCHCDEGWAPPDCM) constitute an EGF-like domain. A helical membrane pass occupies residues 699 to 719 (GLLLSLLLLLVLVLLGASYWY). Residues Tyr717 and Tyr737 each carry the phosphotyrosine; by HCK and LCK modification. At 720-864 (RARLHQRLCQ…PPPAASSLYL (145 aa)) the chain is on the cytoplasmic side. Residues 738–864 (RAAQSGPPER…PPPAASSLYL (127 aa)) form a disordered region. Over residues 753–765 (RAQQMPGTKQANV) the composition is skewed to polar residues. Pro residues-rich tracts occupy residues 768-780 (PVPP…PNPV) and 810-825 (PQGP…PLPA). The SH3-binding signature appears at 816-822 (PPPPRKP). The span at 826-850 (NPQGRPPLGDLPGPGDGSLQLVVPS) shows a compositional bias: low complexity. Positions 851-857 (RPAPPPP) match the SH3-binding motif.

As to quaternary structure, interacts with ITAGV-ITGB3 (vitronectin receptor). Interacts with SH3GL2 and SNX9; this interaction occurs preferentially with ADAM15 precursor, rather than the processed form, suggesting it occurs in a secretory pathway compartment prior to the medial Golgi. Interacts with ITAG9-ITGB1. Interacts specifically with Src family protein-tyrosine kinases (PTKs). Interacts with SH3PXD2A. Interacts with ITAGV-ITGB1. Interacts with GRB2, HCK, ITSN1, ITSN2, LYN, MAPK1, MAPK3, NCF1, NCK1, nephrocystin, PTK6, SNX33, LCK and SRC. The cofactor is Zn(2+). Post-translationally, the precursor is cleaved by a furin endopeptidase. In terms of processing, phosphorylation increases association with PTKs. As to expression, predominantly expressed in brain, spinal cord, sciatic nerve and lung. Expressed at lower levels in all other tissues. In the peripheral nervous system, expressed predominantly by Schwann cells. In the central nervous system, preferentially expressed by neuronal cells.

It is found in the endomembrane system. It localises to the cell junction. The protein localises to the adherens junction. Its subcellular location is the cell projection. The protein resides in the cilium. It is found in the flagellum. It localises to the cytoplasmic vesicle. The protein localises to the secretory vesicle. Its subcellular location is the acrosome. In terms of biological role, active metalloproteinase with gelatinolytic and collagenolytic activity. Plays a role in the wound healing process. Mediates both heterotypic intraepithelial cell/T-cell interactions and homotypic T-cell aggregation. Inhibits beta-1 integrin-mediated cell adhesion and migration of airway smooth muscle cells. Suppresses cell motility on or towards fibronectin possibly by driving alpha-v/beta-1 integrin (ITAGV-ITGB1) cell surface expression via ERK1/2 inactivation. Cleaves E-cadherin in response to growth factor deprivation. Plays a role in glomerular cell migration. Plays a role in pathological neovascularization. May play a role in cartilage remodeling. May be proteolytically processed, during sperm epididymal maturation and the acrosome reaction. May play a role in sperm-egg binding through its disintegrin domain. This is Disintegrin and metalloproteinase domain-containing protein 15 (Adam15) from Rattus norvegicus (Rat).